A 29-amino-acid polypeptide reads, in one-letter code: Trypsin inhibitor 1 (29 aa).

3 cysteine pairs are disulfide-bonded: Cys3-Cys20, Cys10-Cys22, and Cys16-Cys28.

The protein belongs to the protease inhibitor I7 (squash-type serine protease inhibitor) family.

The protein resides in the secreted. Functionally, inhibits trypsin. This Cucurbita maxima (Pumpkin) protein is Trypsin inhibitor 1.